Consider the following 219-residue polypeptide: N-(5'-phosphoribosyl)anthranilate isomerase (219 aa).

The protein belongs to the TrpF family.

The enzyme catalyses N-(5-phospho-beta-D-ribosyl)anthranilate = 1-(2-carboxyphenylamino)-1-deoxy-D-ribulose 5-phosphate. The protein operates within amino-acid biosynthesis; L-tryptophan biosynthesis; L-tryptophan from chorismate: step 3/5. This chain is N-(5'-phosphoribosyl)anthranilate isomerase, found in Chloroherpeton thalassium (strain ATCC 35110 / GB-78).